The sequence spans 552 residues: Membrane protein insertase YidC (552 aa).

A run of 5 helical transmembrane segments spans residues 7 to 24 (VLWVIFFMSAVMLYDNWQ), 364 to 384 (WGWAIVLLTVLIKAVFFPLSA), 434 to 454 (LPVVIQIPVFISLYWVLLASV), 473 to 493 (PFFILPVLMAVSMFVQTSLNP), and 508 to 528 (PIAFSVMFFFFPAGLVLYYVV).

This sequence belongs to the OXA1/ALB3/YidC family. Type 1 subfamily. As to quaternary structure, interacts with the Sec translocase complex via SecD. Specifically interacts with transmembrane segments of nascent integral membrane proteins during membrane integration.

It is found in the cell inner membrane. Its function is as follows. Required for the insertion and/or proper folding and/or complex formation of integral membrane proteins into the membrane. Involved in integration of membrane proteins that insert both dependently and independently of the Sec translocase complex, as well as at least some lipoproteins. Aids folding of multispanning membrane proteins. The protein is Membrane protein insertase YidC of Burkholderia cenocepacia (strain ATCC BAA-245 / DSM 16553 / LMG 16656 / NCTC 13227 / J2315 / CF5610) (Burkholderia cepacia (strain J2315)).